The chain runs to 81 residues: Putative defensin-like protein 102 (81 aa).

A signal peptide spans 1-24 (MTTTMKTFVAFVLTVFFIMSSAHC). 4 disulfides stabilise this stretch: Cys43/Cys78, Cys49/Cys71, Cys57/Cys76, and Cys61/Cys77.

The protein belongs to the DEFL family.

The protein localises to the secreted. This Arabidopsis thaliana (Mouse-ear cress) protein is Putative defensin-like protein 102.